A 216-amino-acid chain; its full sequence is Thiamine-phosphate synthase (216 aa).

Residues 35–39 and Asn67 each bind 4-amino-2-methyl-5-(diphosphooxymethyl)pyrimidine; that span reads QLRDK. 2 residues coordinate Mg(2+): Asp68 and Asp87. Ser106 contacts 4-amino-2-methyl-5-(diphosphooxymethyl)pyrimidine. 132 to 134 provides a ligand contact to 2-[(2R,5Z)-2-carboxy-4-methylthiazol-5(2H)-ylidene]ethyl phosphate; it reads TSS. Lys135 provides a ligand contact to 4-amino-2-methyl-5-(diphosphooxymethyl)pyrimidine. Residues Gly163 and 183–184 each bind 2-[(2R,5Z)-2-carboxy-4-methylthiazol-5(2H)-ylidene]ethyl phosphate; that span reads IS.

The protein belongs to the thiamine-phosphate synthase family. Mg(2+) serves as cofactor.

It catalyses the reaction 2-[(2R,5Z)-2-carboxy-4-methylthiazol-5(2H)-ylidene]ethyl phosphate + 4-amino-2-methyl-5-(diphosphooxymethyl)pyrimidine + 2 H(+) = thiamine phosphate + CO2 + diphosphate. The catalysed reaction is 2-(2-carboxy-4-methylthiazol-5-yl)ethyl phosphate + 4-amino-2-methyl-5-(diphosphooxymethyl)pyrimidine + 2 H(+) = thiamine phosphate + CO2 + diphosphate. The enzyme catalyses 4-methyl-5-(2-phosphooxyethyl)-thiazole + 4-amino-2-methyl-5-(diphosphooxymethyl)pyrimidine + H(+) = thiamine phosphate + diphosphate. It functions in the pathway cofactor biosynthesis; thiamine diphosphate biosynthesis; thiamine phosphate from 4-amino-2-methyl-5-diphosphomethylpyrimidine and 4-methyl-5-(2-phosphoethyl)-thiazole: step 1/1. Its function is as follows. Condenses 4-methyl-5-(beta-hydroxyethyl)thiazole monophosphate (THZ-P) and 2-methyl-4-amino-5-hydroxymethyl pyrimidine pyrophosphate (HMP-PP) to form thiamine monophosphate (TMP). The polypeptide is Thiamine-phosphate synthase (Methanoregula boonei (strain DSM 21154 / JCM 14090 / 6A8)).